The sequence spans 112 residues: Diuretic hormone class 2 (112 aa).

The signal sequence occupies residues Met-1 to Ala-24. Positions Tyr-25 to Glu-71 are excised as a propeptide. Position 104 is a proline amide (Pro-104). A propeptide spanning residues Arg-108–His-112 is cleaved from the precursor.

In terms of tissue distribution, expressed in corpora cardiaca (CC), corpora allata (CA), antennal lobe (AL) and gnathal ganglion (GNG) (at protein level). Expression in CC, CA and AL detected in most animals, expression in GNG in few animals (at protein level).

It is found in the secreted. Its function is as follows. Regulation of fluid secretion. Stimulates Malpighian tubule fluid secretion. The chain is Diuretic hormone class 2 from Agrotis ipsilon (Black cutworm moth).